We begin with the raw amino-acid sequence, 187 residues long: Ribulose bisphosphate carboxylase small subunit, chloroplastic (187 aa).

The N-terminal 56 residues, 1–56, are a transit peptide targeting the chloroplast; the sequence is MASSVMSTATVATGANAAQASMIASFNGLKSAASFPVTRKQDLDITSIASNGGRVE.

This sequence belongs to the RuBisCO small chain family. In terms of assembly, heterohexadecamer of 8 large and 8 small subunits.

The protein localises to the plastid. It is found in the chloroplast. Its function is as follows. RuBisCO catalyzes two reactions: the carboxylation of D-ribulose 1,5-bisphosphate, the primary event in carbon dioxide fixation, as well as the oxidative fragmentation of the pentose substrate. Both reactions occur simultaneously and in competition at the same active site. Although the small subunit is not catalytic it is essential for maximal activity. The chain is Ribulose bisphosphate carboxylase small subunit, chloroplastic from Capsicum annuum (Capsicum pepper).